The primary structure comprises 478 residues: MDRSLGWQGSSVPEDRTEAGIKRFLEDTTDDGELSKFVKDFSGNESCHPPEAKTWASRPQVLEPRPQAPDLYDDDLEFRPPSWPQSADNQQYFCAPAPLSPSARPRSPWGKLDPYDSSEDDKEYVGFATLPNQVHRKSVKKGFDFTLMVAGESGLGKSTLVNSLFLTDLYRDRKLLGAEERIMQTVEITKHAVDIEEKGVRLRLTIVDTPGFGDAVNNTECWKPVAEYIDQQFEQYFRDESGLNRKNIQDNRVHCCLYFISPFGHGLRPLDVEFMKALHQRVNIVPILAKADTLTPPEVDRKKRKIREEIEHFGIKIYQFPDCDSDEDEDFKLQDQALKESIPFAVIGSNTVVEARGRRVRGRLYPWGIVEVENPGHCDFVKLRTMLVRTHMQDLKDVTRETHYENYRAQCIQSMTRLVVKERNRNKLTRESGTDFPIPAVPPGTDPETEKLIREKDEELRRMQEILHKIQKQMKETY.

Disordered stretches follow at residues 40–74 and 87–115; these read DFSG…LYDD and ADNQ…LDPY. The span at 95-108 shows a compositional bias: low complexity; sequence APAPLSPSARPRSP. Phosphoserine occurs at positions 117 and 118. Residues 141-414 enclose the Septin-type G domain; it reads KGFDFTLMVA…ENYRAQCIQS (274 aa). The segment at 151-158 is G1 motif; that stretch reads GESGLGKS. Residues 151-158 and threonine 185 contribute to the GTP site; that span reads GESGLGKS. A G3 motif region spans residues 208–211; sequence DTPG. Residues 289 to 292 form a G4 motif region; the sequence is AKAD. Position 290–298 (290–298) interacts with GTP; sequence KADTLTPPE. Serine 325 is modified (phosphoserine). GTP contacts are provided by glycine 348 and arginine 363. Residues 428 to 448 form a disordered region; sequence LTRESGTDFPIPAVPPGTDPE. Serine 432 carries the post-translational modification Phosphoserine. A Phosphothreonine modification is found at threonine 434. The stretch at 446-478 forms a coiled coil; the sequence is DPETEKLIREKDEELRRMQEILHKIQKQMKETY.

Belongs to the TRAFAC class TrmE-Era-EngA-EngB-Septin-like GTPase superfamily. Septin GTPase family. As to quaternary structure, septins polymerize into heterooligomeric protein complexes that form filaments, and can associate with cellular membranes, actin filaments and microtubules. GTPase activity is required for filament formation. Interacts with SEPTIN8. Component of a septin core octameric complex consisting of SEPTIN12, SEPTIN7, SEPTIN6 and SEPTIN2 or SEPTIN4 in the order 12-7-6-2-2-6-7-12 or 12-7-6-4-4-6-7-12. Interacts with SEPTIN14 (via C-terminus). Interacts with DYRK1A. Interacts with SLC6A3/DAT and SNCA/alpha-synuclein. Interacts with STX1A; in the striatum. Interacts with XIAP (via BIR3 domain) following the induction of apoptosis. Interacts with AREL1 (via HECT domain); in the cytoplasm following induction of apoptosis. Ubiquitinated by AREL1. In terms of processing, phosphorylated by DYRK1A.

Its subcellular location is the cytoplasm. The protein resides in the cell projection. The protein localises to the cilium. It is found in the flagellum. It localises to the cytoplasmic vesicle. Its subcellular location is the secretory vesicle. The protein resides in the axon. The protein localises to the dendrite. It is found in the perikaryon. It localises to the synapse. Filament-forming cytoskeletal GTPase. Pro-apoptotic protein involved in LGR5-positive intestinal stem cell and Paneth cell expansion in the intestines, via its interaction with XIAP. May also play a role in the regulation of cell fate in the intestine. Positive regulator of apoptosis involved in hematopoietic stem cell homeostasis; via its interaction with XIAP. Negative regulator of repair and hair follicle regeneration in response to injury, due to inhibition of hair follicle stem cell proliferation, potentially via its interaction with XIAP. Plays an important role in male fertility and sperm motility. During spermiogenesis, essential for the establishment of the annulus (a fibrous ring structure connecting the midpiece and the principal piece of the sperm flagellum) which is a requisite for the structural and mechanical integrity of the sperm. Involved in the migration of cortical neurons and the formation of neuron leading processes during embryonic development. Required for dopaminergic metabolism in presynaptic autoreceptors; potentially via activity as a presynaptic scaffold protein. The chain is Septin-4 from Macaca fascicularis (Crab-eating macaque).